Here is a 504-residue protein sequence, read N- to C-terminus: MFMKSKAAGSEFDGAVAKDNVNTRLKIAQFMSADPNATADVPQLKLETPTAFKANGEVDTWGPLGSGTAFNDVVNVRAYSVKNSDQPRVMRYFLFSLVNIDKDGTWSDVRPAAGLYEQDPGYVTPGVDPNNKGQGQDSGLVSLDATGLEGDVYLQVVGLDFNYNRVAYLVPLKLNRTKAASEVVAPTNVRAIAYTLSTRIDYLYKTQDPVLDAPTSGTNLWVTTSWDAPVTLSGYRGFRVLRSTKAEGPYSQVAFAGEAQCAKPADAKATTRRCTVSDNTASLITDQDYFYKVVAAGTNEATSDVAPTHTLPIFQPKLLSPGKDVHDVDLTPNYTVKLNLFQTGATGAVMNLRVADFITGESYAYAAKRLTVRKELGETQILSNLQGTSNYYVFRDSYATDNDPKTNNDTVTYDAASDVLTVPHQFEVDYLGGNKVPLQANRRYSWYIDSGYAYRLADPSKPTTAANNYIAAYSVYSDPSDTVRVVPGGVKQGGAEVNDFTTRQ.

A propeptide spanning residues 1 to 212 (MFMKSKAAGS…LYKTQDPVLD (212 aa)) is cleaved from the precursor.

This is an uncharacterized protein from Deinococcus radiodurans (strain ATCC 13939 / DSM 20539 / JCM 16871 / CCUG 27074 / LMG 4051 / NBRC 15346 / NCIMB 9279 / VKM B-1422 / R1).